The chain runs to 841 residues: MAP7 domain-containing protein 1 (841 aa).

2 disordered regions span residues 1–151 (MESG…ERAK) and 184–208 (EQRL…EKNK). Pro residues predominate over residues 22-52 (PPEPRPSPEGDPSPPPPPMSALVPDTPPDTP). A phosphothreonine mark is found at Thr47 and Thr51. A phosphoserine mark is found at Ser70, Ser86, and Ser93. At Thr97 the chain carries Phosphothreonine. Phosphoserine is present on residues Ser113 and Ser116. At Thr118 the chain carries Phosphothreonine. Ser123 and Ser125 each carry phosphoserine. Residues 128–222 (TKQEVKKAGE…AAIQRSVKKT (95 aa)) adopt a coiled-coil conformation. A compositionally biased stretch (basic and acidic residues) spans 130-151 (QEVKKAGERHKLAKERREERAK). A phosphoserine mark is found at Ser254, Ser273, Ser313, Ser366, and Ser399. The segment at 316-813 (TLPRNGRDQG…PSGDKSLSRT (498 aa)) is disordered. Polar residues predominate over residues 365 to 377 (ASASPLTPCSVTR). The span at 405-435 (RRPEASPVQKKEKKDKERENEKEKSALARER) shows a compositional bias: basic and acidic residues. Positions 412 to 441 (VQKKEKKDKERENEKEKSALARERSLKKRQ) form a coiled coil. A phosphoserine mark is found at Ser442, Ser446, Ser452, Ser454, and Ser460. Residues 460–473 (SPKSKARPSSPSTS) show a composition bias toward low complexity. Residue Lys462 forms a Glycyl lysine isopeptide (Lys-Gly) (interchain with G-Cter in SUMO2) linkage. Ser479 and Ser496 each carry phosphoserine. Pro residues predominate over residues 479 to 497 (SPCPSPGPGHTLPPKPPSP). A compositionally biased stretch (basic and acidic residues) spans 523–539 (PEDKSQSKRRASNEKES). Ser544, Ser548, and Ser552 each carry phosphoserine. Residues 544–561 (SPAPSPAPSPTPAPPQKE) show a composition bias toward pro residues. At Thr554 the chain carries Phosphothreonine. Low complexity predominate over residues 562–576 (QPPAETPTDAAVLTS). Residues 577-586 (PPAPAPPVTP) are compositionally biased toward pro residues. The stretch at 593 to 721 (TTDREEATRL…LEEIMKRTRK (129 aa)) forms a coiled coil. Residues 594-735 (TDREEATRLL…ETKQKQDSKE (142 aa)) show a composition bias toward basic and acidic residues. Residues Ser742 and Ser753 each carry the phosphoserine modification. 2 positions are modified to phosphothreonine: Thr813 and Thr816. Ser834 carries the post-translational modification Phosphoserine.

The protein belongs to the MAP7 family.

It is found in the cytoplasm. It localises to the cytoskeleton. The protein localises to the spindle. The protein resides in the microtubule organizing center. Its subcellular location is the centrosome. It is found in the midbody. Microtubule-stabilizing protein involved in the control of cell motility and neurite outgrowth. Facilitate microtubule stabilization through the maintenance of acetylated stable microtubules. The protein is MAP7 domain-containing protein 1 (MAP7D1) of Homo sapiens (Human).